A 387-amino-acid chain; its full sequence is F420-dependent formate dehydrogenase 1 subunit beta (387 aa).

2 consecutive 4Fe-4S ferredoxin-type domains span residues 275–298 and 326–355; these read TIEEWNRQWNKCIKCYGCRDVCPV and VRMSHMAFSCVNCGQCEDVCPMEIPVARIF. Residues cysteine 286, cysteine 289, cysteine 292, cysteine 296, cysteine 335, cysteine 338, cysteine 341, and cysteine 345 each coordinate [4Fe-4S] cluster. The tract at residues 366–387 is disordered; sequence LGYRPGVDDEAPPALGGSCPTQ.

This sequence belongs to the FrhB family. In terms of assembly, dimer of an alpha (FdhA1) and a beta (FdhB1) subunit. [4Fe-4S] cluster is required as a cofactor. The cofactor is FAD. It depends on Zn(2+) as a cofactor.

It catalyses the reaction oxidized coenzyme F420-(gamma-L-Glu)(n) + formate + 2 H(+) = reduced coenzyme F420-(gamma-L-Glu)(n) + CO2. In terms of biological role, catalyzes the oxidation of formate to carbon dioxide, with coenzyme F420 as the electron acceptor. In vitro can also use methyl viologen as electron acceptor. In Methanococcus maripaludis (strain DSM 14266 / JCM 13030 / NBRC 101832 / S2 / LL), this protein is F420-dependent formate dehydrogenase 1 subunit beta.